Consider the following 241-residue polypeptide: 3-oxoacyl-[acyl-carrier-protein] reductase FabG (241 aa).

NADP(+) contacts are provided by residues 13 to 16 (GASG), S38, 57 to 58 (EI), and N83. Residue S135 coordinates substrate. The active-site Proton acceptor is the Y148. Residues 148–152 (YCASK) and I181 contribute to the NADP(+) site.

It belongs to the short-chain dehydrogenases/reductases (SDR) family. As to quaternary structure, homotetramer.

The catalysed reaction is a (3R)-hydroxyacyl-[ACP] + NADP(+) = a 3-oxoacyl-[ACP] + NADPH + H(+). It participates in lipid metabolism; fatty acid biosynthesis. Functionally, catalyzes the NADPH-dependent reduction of beta-ketoacyl-ACP substrates to beta-hydroxyacyl-ACP products, the first reductive step in the elongation cycle of fatty acid biosynthesis. The sequence is that of 3-oxoacyl-[acyl-carrier-protein] reductase FabG (fabG) from Rickettsia felis (strain ATCC VR-1525 / URRWXCal2) (Rickettsia azadi).